The primary structure comprises 113 residues: U11-theraphotoxin-Hhn1o (113 aa).

The first 21 residues, M1–A21, serve as a signal peptide directing secretion. Positions D22 to R74 are excised as a propeptide. Positions E61–D83 are disordered. Intrachain disulfides connect C75/C90 and C82/C95.

This sequence belongs to the neurotoxin 14 (magi-1) family. 01 (HNTX-16) subfamily. Expressed by the venom gland.

The protein resides in the secreted. Functionally, probable ion channel inhibitor. The chain is U11-theraphotoxin-Hhn1o from Cyriopagopus hainanus (Chinese bird spider).